A 430-amino-acid polypeptide reads, in one-letter code: Ribosomal protein uS12 methylthiotransferase RimO (430 aa).

In terms of domain architecture, MTTase N-terminal spans 4 to 119 (LKINFISLGC…IPVLFDIKPK (116 aa)). Residues Cys13, Cys49, Cys82, Cys141, Cys145, and Cys148 each contribute to the [4Fe-4S] cluster site. In terms of domain architecture, Radical SAM core spans 127 to 358 (STPKHTAYLK…SALQENITEQ (232 aa)). Residues 361 to 430 (KSLIGKELDI…DKYDVVGEAE (70 aa)) form the TRAM domain.

The protein belongs to the methylthiotransferase family. RimO subfamily. [4Fe-4S] cluster serves as cofactor.

The protein localises to the cytoplasm. The enzyme catalyses L-aspartate(89)-[ribosomal protein uS12]-hydrogen + (sulfur carrier)-SH + AH2 + 2 S-adenosyl-L-methionine = 3-methylsulfanyl-L-aspartate(89)-[ribosomal protein uS12]-hydrogen + (sulfur carrier)-H + 5'-deoxyadenosine + L-methionine + A + S-adenosyl-L-homocysteine + 2 H(+). Functionally, catalyzes the methylthiolation of an aspartic acid residue of ribosomal protein uS12. This Sulfurihydrogenibium sp. (strain YO3AOP1) protein is Ribosomal protein uS12 methylthiotransferase RimO.